A 131-amino-acid polypeptide reads, in one-letter code: Small ribosomal subunit protein uS11 (131 aa).

The protein belongs to the universal ribosomal protein uS11 family. Part of the 30S ribosomal subunit. Interacts with proteins S7 and S18. Binds to IF-3.

In terms of biological role, located on the platform of the 30S subunit, it bridges several disparate RNA helices of the 16S rRNA. Forms part of the Shine-Dalgarno cleft in the 70S ribosome. This Dictyoglomus turgidum (strain DSM 6724 / Z-1310) protein is Small ribosomal subunit protein uS11.